Consider the following 123-residue polypeptide: Putative hypoxanthine phosphoribosyltransferase (123 aa).

Functionally, may play a role in purine salvage. In Methanosarcina mazei (strain ATCC BAA-159 / DSM 3647 / Goe1 / Go1 / JCM 11833 / OCM 88) (Methanosarcina frisia), this protein is Putative hypoxanthine phosphoribosyltransferase.